The sequence spans 434 residues: Ribosomal protein uS12 methylthiotransferase RimO (434 aa).

The 117-residue stretch at 6–122 (SKLYLLTLGC…IIAELGGHYK (117 aa)) folds into the MTTase N-terminal domain. [4Fe-4S] cluster-binding residues include cysteine 15, cysteine 51, cysteine 85, cysteine 146, cysteine 150, and cysteine 153. The region spanning 132-361 (LTPPYFSYLK…MAAQEEIAYA (230 aa)) is the Radical SAM core domain. A TRAM domain is found at 364–434 (QALVGSFMPV…AFDLFGSLVL (71 aa)).

This sequence belongs to the methylthiotransferase family. RimO subfamily. [4Fe-4S] cluster is required as a cofactor.

The protein resides in the cytoplasm. It carries out the reaction L-aspartate(89)-[ribosomal protein uS12]-hydrogen + (sulfur carrier)-SH + AH2 + 2 S-adenosyl-L-methionine = 3-methylsulfanyl-L-aspartate(89)-[ribosomal protein uS12]-hydrogen + (sulfur carrier)-H + 5'-deoxyadenosine + L-methionine + A + S-adenosyl-L-homocysteine + 2 H(+). Its function is as follows. Catalyzes the methylthiolation of an aspartic acid residue of ribosomal protein uS12. This chain is Ribosomal protein uS12 methylthiotransferase RimO, found in Chloroherpeton thalassium (strain ATCC 35110 / GB-78).